The following is a 104-amino-acid chain: Ubiquitin-related modifier 1 homolog (104 aa).

The residue at position 104 (G104) is a 1-thioglycine. A Glycyl lysine isopeptide (Gly-Lys) (interchain with K-? in acceptor proteins) cross-link involves residue G104.

It belongs to the URM1 family. Interacts with cer. C-terminal thiocarboxylation occurs in 2 steps, it is first acyl-adenylated (-COAMP) via the hesA/moeB/thiF part of the MOCS3 homolog, then thiocarboxylated (-COSH) via the rhodanese domain of the MOCS3 homolog.

Its subcellular location is the cytoplasm. It participates in tRNA modification; 5-methoxycarbonylmethyl-2-thiouridine-tRNA biosynthesis. Functionally, acts as a sulfur carrier required for 2-thiolation of mcm(5)S(2)U at tRNA wobble positions of cytosolic tRNA(Lys), tRNA(Glu) and tRNA(Gln). Serves as sulfur donor in tRNA 2-thiolation reaction by being thiocarboxylated (-COSH) at its C-terminus by MOCS3. The sulfur is then transferred to tRNA to form 2-thiolation of mcm(5)S(2)U. Also acts as a ubiquitin-like protein (UBL) that is covalently conjugated via an isopeptide bond to lysine residues of target proteins such as Prx2/Jafrac1, Ciao1, Eip71CD and GILT1. The thiocarboxylated form serves as substrate for conjugation and oxidative stress specifically induces the formation of UBL-protein conjugates. The polypeptide is Ubiquitin-related modifier 1 homolog (Drosophila grimshawi (Hawaiian fruit fly)).